A 401-amino-acid polypeptide reads, in one-letter code: E3 ubiquitin-protein ligase RGLG4 (401 aa).

The disordered stretch occupies residues 1-43; it reads MTMGNFLKRFGSGKSRSSRNMTLGTTSSQSHEPSPSDPSLSLA. Positions 8-19 are enriched in low complexity; sequence KRFGSGKSRSSR. Polar residues predominate over residues 20–32; that stretch reads NMTLGTTSSQSHE. Residues 79–299 form the VWFA domain; that stretch reads NLILGVDFTK…KETAFALAAL (221 aa). The segment at 326-350 is disordered; the sequence is VPRPPPIPYTPPTNAELPSTASPAS. Residues 327–336 are compositionally biased toward pro residues; the sequence is PRPPPIPYTP. The span at 341–350 shows a compositional bias: polar residues; the sequence is ELPSTASPAS. An RING-type zinc finger spans residues 357–390; that stretch reads CPICLTNRKDVAFSCGHMTCGDCGSKISNCPICR.

Interacts with UBC30, GRXS17 and GLB3. In terms of tissue distribution, widely expressed.

The protein localises to the cytoplasm. Its subcellular location is the nucleus. It carries out the reaction S-ubiquitinyl-[E2 ubiquitin-conjugating enzyme]-L-cysteine + [acceptor protein]-L-lysine = [E2 ubiquitin-conjugating enzyme]-L-cysteine + N(6)-ubiquitinyl-[acceptor protein]-L-lysine.. Functionally, possesses E3 ubiquitin-protein ligase in vitro. Acts as upstream modulator of jasmonate (JA) signaling in response to various stimuli, such as JA-inhibited root growth, JA-inductive gene expression, coronatine-mediated pathogen susceptibility, wound-stimulated expression of JA-responsive genes and wound-induced JA biosynthesis. Controls fumonisin B1 (FB1)-triggered programmed cell death (PCD) by modulating the JA signaling pathway. May mediate salicylic acid (SA) suppression of JA signaling in FB1-induced responses. May mediate the formation of 'Lys-48'-linked multiubiquitin chains. Mediates the polyubiquitination and subsequent proteasomal degradation of the target protein GRXS17. In Arabidopsis thaliana (Mouse-ear cress), this protein is E3 ubiquitin-protein ligase RGLG4.